A 94-amino-acid polypeptide reads, in one-letter code: Parvalbumin beta 4 (94 aa).

The residue at position 1 (Ala1) is an N-acetylalanine. EF-hand domains lie at 36 to 63 (FFAI…FSAG) and 67 to 94 (LSDA…EFAA). Positions 41, 43, 45, 47, 49, 52, 80, 82, 84, 86, and 91 each coordinate Ca(2+).

This sequence belongs to the parvalbumin family.

In terms of biological role, in muscle, parvalbumin is thought to be involved in relaxation after contraction. It binds two calcium ions. This Merluccius bilinearis (Silver hake) protein is Parvalbumin beta 4.